The primary structure comprises 103 residues: Large ribosomal subunit protein uL24 (103 aa).

It belongs to the universal ribosomal protein uL24 family. In terms of assembly, part of the 50S ribosomal subunit.

Its function is as follows. One of two assembly initiator proteins, it binds directly to the 5'-end of the 23S rRNA, where it nucleates assembly of the 50S subunit. In terms of biological role, one of the proteins that surrounds the polypeptide exit tunnel on the outside of the subunit. This is Large ribosomal subunit protein uL24 from Bacillus cytotoxicus (strain DSM 22905 / CIP 110041 / 391-98 / NVH 391-98).